A 387-amino-acid polypeptide reads, in one-letter code: Ferrochelatase (387 aa).

Residues H196 and E277 each coordinate Fe cation.

The protein belongs to the ferrochelatase family.

It localises to the cytoplasm. The enzyme catalyses heme b + 2 H(+) = protoporphyrin IX + Fe(2+). The protein operates within porphyrin-containing compound metabolism; protoheme biosynthesis; protoheme from protoporphyrin-IX: step 1/1. Catalyzes the ferrous insertion into protoporphyrin IX. The polypeptide is Ferrochelatase (Synechococcus elongatus (strain ATCC 33912 / PCC 7942 / FACHB-805) (Anacystis nidulans R2)).